The sequence spans 222 residues: MNEVKESLRSIEQKYKLFQQQQLTFTAALEHCRENAHDKIRPISSIGQVQSYMEHYCNSSTDRRVLLMFLDICSELNKLCQHFEAVHSGTPVTNNLLEKCKTLVSQSNDLSSLRAKYPHDVVNHLSCDEARNHYGGVVSLIPLILDLMKEWIAHSEKLPRKVLQHVSEPQAHQESTRGAARPAQAIGTQPRATKHKCRQLTKASLKPRGCSKPPWRPPGGKL.

Residues 164–222 (QHVSEPQAHQESTRGAARPAQAIGTQPRATKHKCRQLTKASLKPRGCSKPPWRPPGGKL) form a disordered region.

In terms of assembly, microtubule inner protein component of sperm flagellar doublet microtubules. Interacts with CABP1 and CALR. Interacts with INCA1. Interacts with microtubules.

The protein resides in the cytoplasm. The protein localises to the cytoplasmic vesicle. It is found in the secretory vesicle. Its subcellular location is the acrosome. It localises to the cytoskeleton. The protein resides in the cilium basal body. The protein localises to the flagellum axoneme. It is found in the cilium axoneme. Its subcellular location is the nucleus. Functionally, microtubule inner protein (MIP) part of the dynein-decorated doublet microtubules (DMTs) of multiciliated respiratory cells and the distal singlet microtubules of monoflagellated spermatozoa. Forms an extensive interaction network cross-linking the lumen of axonemal doublet microtubules. The sequence is that of Sperm acrosome-associated protein 9 from Homo sapiens (Human).